A 59-amino-acid polypeptide reads, in one-letter code: Lantipeptide Flvbeta.f (59 aa).

The propeptide at 1-27 is cleaved by FlvT; the sequence is MEKMNNIAGITPENELDEMFDDSVVGA. 2,3-didehydrobutyrine; by FlvM2 occurs at positions 31 and 32. 2 consecutive cross-links (beta-methyllanthionine (Thr-Cys); by FlvM2) follow at residues 41 to 47 and 53 to 56; these read TKNPQIC and TVKC.

Post-translationally, contains DL-beta-methyllanthionine, when coepressed in E.coli with the flavecin synthetase FlvM2.

It localises to the secreted. Its function is as follows. Lanthionine-containing peptide that does probably not show antibacterial activity, since its analog [+7]Flvbeta.f does not show antibacterial activity against M.luteus. Also does not show antibiotic activity when tested with [Del2]Flvalpha.a, an analog of Flvalpha.a, which is encoded by the same operon than Flvbeta.f. The bactericidal activity of lantibiotics is based on depolarization of energized bacterial cytoplasmic membranes, initiated by the formation of aqueous transmembrane pores. The sequence is that of Lantipeptide Flvbeta.f from Ruminococcus flavefaciens.